A 291-amino-acid polypeptide reads, in one-letter code: tRNA dimethylallyltransferase (291 aa).

9 to 16 lines the ATP pocket; that stretch reads GPTASGKT. Position 11–16 (11–16) interacts with substrate; sequence TASGKT. The tract at residues 34–37 is interaction with substrate tRNA; that stretch reads DSLQ.

Belongs to the IPP transferase family. As to quaternary structure, monomer. It depends on Mg(2+) as a cofactor.

It catalyses the reaction adenosine(37) in tRNA + dimethylallyl diphosphate = N(6)-dimethylallyladenosine(37) in tRNA + diphosphate. Catalyzes the transfer of a dimethylallyl group onto the adenine at position 37 in tRNAs that read codons beginning with uridine, leading to the formation of N6-(dimethylallyl)adenosine (i(6)A). The sequence is that of tRNA dimethylallyltransferase from Onion yellows phytoplasma (strain OY-M).